The following is a 306-amino-acid chain: Lipoyl synthase (306 aa).

[4Fe-4S] cluster contacts are provided by Cys41, Cys46, Cys52, Cys68, Cys72, Cys75, and Ser281. A Radical SAM core domain is found at Gly54–Lys270. Positions His283–Asn306 are disordered.

Belongs to the radical SAM superfamily. Lipoyl synthase family. Requires [4Fe-4S] cluster as cofactor.

The protein localises to the cytoplasm. It catalyses the reaction [[Fe-S] cluster scaffold protein carrying a second [4Fe-4S](2+) cluster] + N(6)-octanoyl-L-lysyl-[protein] + 2 oxidized [2Fe-2S]-[ferredoxin] + 2 S-adenosyl-L-methionine + 4 H(+) = [[Fe-S] cluster scaffold protein] + N(6)-[(R)-dihydrolipoyl]-L-lysyl-[protein] + 4 Fe(3+) + 2 hydrogen sulfide + 2 5'-deoxyadenosine + 2 L-methionine + 2 reduced [2Fe-2S]-[ferredoxin]. It functions in the pathway protein modification; protein lipoylation via endogenous pathway; protein N(6)-(lipoyl)lysine from octanoyl-[acyl-carrier-protein]. In terms of biological role, catalyzes the radical-mediated insertion of two sulfur atoms into the C-6 and C-8 positions of the octanoyl moiety bound to the lipoyl domains of lipoate-dependent enzymes, thereby converting the octanoylated domains into lipoylated derivatives. This is Lipoyl synthase from Staphylococcus haemolyticus (strain JCSC1435).